A 228-amino-acid polypeptide reads, in one-letter code: Glycosylphosphatidylinositol-anchored high density lipoprotein-binding protein 1 (228 aa).

The N-terminal stretch at 1–22 (MKALRAVLLILLLSGQPGSGWA) is a signal peptide. The interval 21–32 (WAQEDGDADPEP) is disordered. An important for LPL transport to the lumenal surface of endothelial cells region spans residues 24 to 48 (EDGDADPEPENYNYDDDDDEEEEEE). The segment covering 24–49 (EDGDADPEPENYNYDDDDDEEEEEET) has biased composition (acidic residues). Tyrosine 35 is modified (sulfotyrosine). Residues 61–148 (LQCYFCQVLH…PWQNPQVQNP (88 aa)) enclose the UPAR/Ly6 domain. Intrachain disulfides connect cysteine 63–cysteine 88, cysteine 66–cysteine 75, cysteine 81–cysteine 109, cysteine 113–cysteine 129, and cysteine 130–cysteine 135. A glycan (N-linked (GlcNAc...) asparagine) is linked at asparagine 76. The segment at 102-108 (LTTYSMW) is important for interaction with LPL. Residues 145 to 200 (VQNPLGGRADSPLESGTRHPQGGKFSHPQVVKAAHPQSDGANLPKSGKANQPQGSG) form a disordered region. Glycine 198 is lipidated: GPI-anchor amidated glycine. The propeptide at 199–228 (SGAGYPSGWTKFGNIALLLSFFTCLWASGA) is removed in mature form.

In terms of assembly, mostly monomer, but also homodimer and homooligomer. Interacts with lipoprotein lipase (LPL). Interacts with high affinity with high-density lipoprotein (HDL). Interacts with chylomicrons. Interacts with APOA5. Post-translationally, glycosylation of Asn-76 is critical for cell surface localization. In terms of processing, sulfation of a Tyr in the N-terminal acidic region increases the affinity for LPL. Detected in fat tissue. Detected on the luminal surface of capillary endothelial cells in heart, skeletal muscle and brown adipose tissue (at protein level). Detected in heart and brown adipose tissue. Expressed at lower levels in lung and liver.

It is found in the apical cell membrane. Its subcellular location is the basolateral cell membrane. The protein resides in the cell membrane. In terms of biological role, mediates the transport of lipoprotein lipase LPL from the basolateral to the apical surface of endothelial cells in capillaries. Anchors LPL on the surface of endothelial cells in the lumen of blood capillaries. Thereby, plays an important role in lipolytic processing of chylomicrons by LPL, triglyceride metabolism and lipid homeostasis. Binds chylomicrons and phospholipid particles that contain APOA5. Binds high-density lipoprotein (HDL) and plays a role in the uptake of lipids from HDL. The polypeptide is Glycosylphosphatidylinositol-anchored high density lipoprotein-binding protein 1 (Mus musculus (Mouse)).